The sequence spans 437 residues: Phosphomethylpyrimidine synthase (437 aa).

Substrate contacts are provided by residues Asn69, Met98, Tyr127, His163, 185–187 (SRG), 226–229 (DACR), and Glu265. His269 lines the Zn(2+) pocket. Tyr292 contacts substrate. His333 contributes to the Zn(2+) binding site. Residues Cys409, Cys412, and Cys416 each contribute to the [4Fe-4S] cluster site.

Belongs to the ThiC family. It depends on [4Fe-4S] cluster as a cofactor.

The enzyme catalyses 5-amino-1-(5-phospho-beta-D-ribosyl)imidazole + S-adenosyl-L-methionine = 4-amino-2-methyl-5-(phosphooxymethyl)pyrimidine + CO + 5'-deoxyadenosine + formate + L-methionine + 3 H(+). It functions in the pathway cofactor biosynthesis; thiamine diphosphate biosynthesis. Catalyzes the synthesis of the hydroxymethylpyrimidine phosphate (HMP-P) moiety of thiamine from aminoimidazole ribotide (AIR) in a radical S-adenosyl-L-methionine (SAM)-dependent reaction. The sequence is that of Phosphomethylpyrimidine synthase from Clostridium botulinum (strain Langeland / NCTC 10281 / Type F).